Here is a 744-residue protein sequence, read N- to C-terminus: Tripartite motif-containing protein 2 (744 aa).

Serine 10 carries the phosphoserine modification. The segment at 23–64 (CSICLERYKNPKVLPCLHTFCERCLQNYIPAHSLTLSCPVCR) adopts an RING-type zinc-finger fold. Residues 113 to 154 (GKPLSCPNHDGNVMEFYCQSCETAMCRECTEGEHAEHPTVPL) form a B box-type zinc finger. Residues cysteine 118, histidine 121, cysteine 141, and histidine 146 each coordinate Zn(2+). A Filamin repeat occupies 320–421 (TTNAVASETV…IRGSPFKLKV (102 aa)). Position 371 is a phosphothreonine (threonine 371). 3 positions are modified to phosphoserine: serine 375, serine 424, and serine 428. Residues 432-462 (EGVKRRVKSPGSGHVKQKAVKRPASMYSTGK) form a disordered region. NHL repeat units lie at residues 473–516 (IFRV…FSND), 520–563 (KSRF…FSND), 564–605 (GKFK…FQPN), 609–652 (VTRF…FNQE), 656–699 (MLKF…FDGS), and 700–743 (GSFL…YRYL).

The protein belongs to the TRIM/RBCC family. As to quaternary structure, forms homooligomers. Interacts with TRIM3; this interaction reduces TRIM2 activity. Interacts with myosin V; myosin V may not be a substrate for ubiquitination. Interacts with NEFL. Interacts with phosphorylated BCL2L11. Interacts with SIRPA. Post-translationally, RING-type zinc finger-dependent and UBE2D1-dependent autoubiquitination. In terms of tissue distribution, highly expressed in the cerebellum, hippocampus, retina and spinal cord. In the cerebellum, strongest expression in Purkinje cells and in the deep cerebellar nuclei. In retina, high expression in the ganglionic cell layer, inner nuclear layer and inthe outer plexiform layer. Particularly high expression in the hippocampus, in pyramidal cells of CA1-CA3 hippocampal areas and ingranule cells of the dentate gyrus.

It is found in the cytoplasm. It carries out the reaction S-ubiquitinyl-[E2 ubiquitin-conjugating enzyme]-L-cysteine + [acceptor protein]-L-lysine = [E2 ubiquitin-conjugating enzyme]-L-cysteine + N(6)-ubiquitinyl-[acceptor protein]-L-lysine.. The protein operates within protein modification; protein ubiquitination. In terms of biological role, UBE2D1-dependent E3 ubiquitin-protein ligase that mediates the ubiquitination of NEFL and of phosphorylated BCL2L11. Plays a neuroprotective function. May play a role in neuronal rapid ischemic tolerance. Plays a role in antiviral immunity and limits new world arenavirus infection independently of its ubiquitin ligase activity by decreasing virus internalization. This Mus musculus (Mouse) protein is Tripartite motif-containing protein 2 (Trim2).